The primary structure comprises 89 residues: Small ribosomal subunit protein uS15 (89 aa).

The disordered stretch occupies residues 1-25; that stretch reads MSLDTTEKQQLINTHQTHGTDTGSA. Residues 8 to 25 show a composition bias toward polar residues; sequence KQQLINTHQTHGTDTGSA.

Belongs to the universal ribosomal protein uS15 family. As to quaternary structure, part of the 30S ribosomal subunit. Forms a bridge to the 50S subunit in the 70S ribosome, contacting the 23S rRNA.

Functionally, one of the primary rRNA binding proteins, it binds directly to 16S rRNA where it helps nucleate assembly of the platform of the 30S subunit by binding and bridging several RNA helices of the 16S rRNA. In terms of biological role, forms an intersubunit bridge (bridge B4) with the 23S rRNA of the 50S subunit in the ribosome. This Parasynechococcus marenigrum (strain WH8102) protein is Small ribosomal subunit protein uS15.